The chain runs to 261 residues: Large ribosomal subunit protein uL2 (261 aa).

The tract at residues 207–233 (VEHPHGGGNHQHIGKASTVKRGTPPGR) is disordered.

Belongs to the universal ribosomal protein uL2 family.

Its subcellular location is the cytoplasm. The chain is Large ribosomal subunit protein uL2 (RpL8) from Aedes albopictus (Asian tiger mosquito).